A 200-amino-acid polypeptide reads, in one-letter code: Dephospho-CoA kinase (200 aa).

The region spanning 4 to 200 (VIGLTGGIAS…AILKKWNIID (197 aa)) is the DPCK domain. Residue 12 to 17 (ASGKST) participates in ATP binding.

The protein belongs to the CoaE family.

The protein localises to the cytoplasm. It carries out the reaction 3'-dephospho-CoA + ATP = ADP + CoA + H(+). It functions in the pathway cofactor biosynthesis; coenzyme A biosynthesis; CoA from (R)-pantothenate: step 5/5. Catalyzes the phosphorylation of the 3'-hydroxyl group of dephosphocoenzyme A to form coenzyme A. In Bacillus cereus (strain ZK / E33L), this protein is Dephospho-CoA kinase.